Consider the following 361-residue polypeptide: Chorismate synthase (361 aa).

NADP(+) contacts are provided by R48 and R54. FMN-binding positions include 131–133 (RSS), 243–244 (NA), G287, 302–306 (KPTSS), and R328.

The protein belongs to the chorismate synthase family. Homotetramer. FMNH2 serves as cofactor.

The enzyme catalyses 5-O-(1-carboxyvinyl)-3-phosphoshikimate = chorismate + phosphate. It participates in metabolic intermediate biosynthesis; chorismate biosynthesis; chorismate from D-erythrose 4-phosphate and phosphoenolpyruvate: step 7/7. Functionally, catalyzes the anti-1,4-elimination of the C-3 phosphate and the C-6 proR hydrogen from 5-enolpyruvylshikimate-3-phosphate (EPSP) to yield chorismate, which is the branch point compound that serves as the starting substrate for the three terminal pathways of aromatic amino acid biosynthesis. This reaction introduces a second double bond into the aromatic ring system. This is Chorismate synthase from Rhodopseudomonas palustris (strain BisB5).